The following is a 132-amino-acid chain: Large-conductance mechanosensitive channel (132 aa).

3 helical membrane passes run 8–28 (FALK…GAFG), 30–50 (IVSS…LGGV), and 67–87 (GAFI…FLFI).

Belongs to the MscL family. In terms of assembly, homopentamer.

The protein resides in the cell membrane. Functionally, channel that opens in response to stretch forces in the membrane lipid bilayer. May participate in the regulation of osmotic pressure changes within the cell. In Bacillus cytotoxicus (strain DSM 22905 / CIP 110041 / 391-98 / NVH 391-98), this protein is Large-conductance mechanosensitive channel.